Reading from the N-terminus, the 208-residue chain is uncharacterized protein (208 aa).

This is an uncharacterized protein from Schizosaccharomyces pombe (strain 972 / ATCC 24843) (Fission yeast).